Reading from the N-terminus, the 365-residue chain is Eukaryotic translation initiation factor 3 subunit H (365 aa).

An MPN domain is found at 11-160; it reads VKVEALVVMK…LRAFRLSPKF (150 aa).

This sequence belongs to the eIF-3 subunit H family. Component of the eukaryotic translation initiation factor 3 (eIF-3) complex.

It is found in the cytoplasm. In terms of biological role, component of the eukaryotic translation initiation factor 3 (eIF-3) complex, which is involved in protein synthesis of a specialized repertoire of mRNAs and, together with other initiation factors, stimulates binding of mRNA and methionyl-tRNAi to the 40S ribosome. The eIF-3 complex specifically targets and initiates translation of a subset of mRNAs involved in cell proliferation. The protein is Eukaryotic translation initiation factor 3 subunit H of Aspergillus niger (strain ATCC MYA-4892 / CBS 513.88 / FGSC A1513).